Here is an 86-residue protein sequence, read N- to C-terminus: ATP synthase subunit c (86 aa).

The next 2 membrane-spanning stretches (helical) occupy residues 4-24 (AIVAAASAIGAGIAVATGIGA) and 57-77 (VAIAESSAIYGLVISIILLFV).

This sequence belongs to the ATPase C chain family. As to quaternary structure, F-type ATPases have 2 components, F(1) - the catalytic core - and F(0) - the membrane proton channel. F(1) has five subunits: alpha(3), beta(3), gamma(1), delta(1), epsilon(1). F(0) has three main subunits: a(1), b(2) and c(10-14). The alpha and beta chains form an alternating ring which encloses part of the gamma chain. F(1) is attached to F(0) by a central stalk formed by the gamma and epsilon chains, while a peripheral stalk is formed by the delta and b chains.

It is found in the cell membrane. Its function is as follows. F(1)F(0) ATP synthase produces ATP from ADP in the presence of a proton or sodium gradient. F-type ATPases consist of two structural domains, F(1) containing the extramembraneous catalytic core and F(0) containing the membrane proton channel, linked together by a central stalk and a peripheral stalk. During catalysis, ATP synthesis in the catalytic domain of F(1) is coupled via a rotary mechanism of the central stalk subunits to proton translocation. Functionally, key component of the F(0) channel; it plays a direct role in translocation across the membrane. A homomeric c-ring of between 10-14 subunits forms the central stalk rotor element with the F(1) delta and epsilon subunits. In Clostridioides difficile (strain 630) (Peptoclostridium difficile), this protein is ATP synthase subunit c.